A 146-amino-acid polypeptide reads, in one-letter code: 3-dehydroquinate dehydratase (146 aa).

Tyrosine 24 acts as the Proton acceptor in catalysis. Substrate contacts are provided by asparagine 73, histidine 79, and aspartate 86. Histidine 99 acts as the Proton donor in catalysis. Residues 100–101 (LS) and arginine 110 each bind substrate.

Belongs to the type-II 3-dehydroquinase family. In terms of assembly, homododecamer.

It carries out the reaction 3-dehydroquinate = 3-dehydroshikimate + H2O. It participates in metabolic intermediate biosynthesis; chorismate biosynthesis; chorismate from D-erythrose 4-phosphate and phosphoenolpyruvate: step 3/7. Catalyzes a trans-dehydration via an enolate intermediate. This chain is 3-dehydroquinate dehydratase, found in Shewanella oneidensis (strain ATCC 700550 / JCM 31522 / CIP 106686 / LMG 19005 / NCIMB 14063 / MR-1).